A 272-amino-acid chain; its full sequence is Aquaporin-11 (272 aa).

Over 1-14 (MTALRALWSEMQDT) the chain is Cytoplasmic. The helical transmembrane segment at 15–35 (CTSLGLMLSVVLLAGLARVVA) threads the bilayer. Over 36-47 (RQQQLHRPMAHA) the chain is Lumenal. A helical transmembrane segment spans residues 48–68 (FVLEFLATLQLCCCTHELLLL). The Cytoplasmic portion of the chain corresponds to 69–75 (SEQEPAH). A helical membrane pass occupies residues 76-96 (PTWPLTLIYFFTLVHGLTLVG). Residues 97 to 167 (TSSNPCGVMM…NPIQVDLPKA (71 aa)) lie on the Lumenal side of the membrane. The NPC signature appears at 100 to 102 (NPC). A helical transmembrane segment spans residues 168 to 188 (VIVEALCSFIFHSALLNFQEV). The Cytoplasmic segment spans residues 189 to 195 (RPKLRIH). The chain crosses the membrane as a helical span at residues 196–216 (LLAALITFLVYAGGSLTGAVF). Residues 217–219 (NPA) carry the NPA motif. Topologically, residues 217–235 (NPALALSLHFKCFDEAFLQ) are lumenal. A helical transmembrane segment spans residues 236-256 (FFIVYWLAPSLGILLMILMFS). Residues 257 to 272 (FFLPWLYNNHTINKKE) lie on the Cytoplasmic side of the membrane.

Belongs to the MIP/aquaporin (TC 1.A.8) family. AQP11/AQP12 subfamily. As to quaternary structure, homodimer; disulfide-linked. Homotetramer. Can also form homomultimer. In terms of processing, not glycosylated. In terms of tissue distribution, expressed in retina specifically at retinal Mueller glial cells.

Its subcellular location is the endoplasmic reticulum membrane. The protein resides in the cytoplasmic vesicle membrane. The protein localises to the cell membrane. It catalyses the reaction H2O(in) = H2O(out). It carries out the reaction glycerol(in) = glycerol(out). The enzyme catalyses H2O2(out) = H2O2(in). Functionally, channel protein that facilitates the transport of water, glycerol and hydrogen peroxide across membrane of cell or organelles guaranteeing intracellular homeostasis in several organes like liver, kidney and brain. In situation of stress, participates in endoplasmic reticulum (ER) homeostasis by regulating redox homeostasis through the transport of hydrogen peroxide across the endoplasmic reticulum membrane thereby regulating the oxidative stress through the NADPH oxidase 2 pathway. Plays a role by maintaining an environment suitable for translation or protein foldings in the ER lumen namely by participating in the PKD1 glycosylation processing resulting in regulation of PKD1 membrane trafficking thereby preventing the accumulation of unfolding protein in ER. Plays a role in the proximal tubule function by regulating its endosomal acidification. May play a role in postnatal kidney development. This chain is Aquaporin-11, found in Equus caballus (Horse).